A 311-amino-acid polypeptide reads, in one-letter code: Porphobilinogen deaminase (311 aa).

Residue Cys243 is modified to S-(dipyrrolylmethanemethyl)cysteine.

It belongs to the HMBS family. Monomer. Dipyrromethane is required as a cofactor.

The enzyme catalyses 4 porphobilinogen + H2O = hydroxymethylbilane + 4 NH4(+). It functions in the pathway porphyrin-containing compound metabolism; protoporphyrin-IX biosynthesis; coproporphyrinogen-III from 5-aminolevulinate: step 2/4. Functionally, tetrapolymerization of the monopyrrole PBG into the hydroxymethylbilane pre-uroporphyrinogen in several discrete steps. The protein is Porphobilinogen deaminase of Aliivibrio fischeri (strain ATCC 700601 / ES114) (Vibrio fischeri).